The chain runs to 395 residues: F-box protein At5g46170 (395 aa).

In terms of domain architecture, F-box spans 24-72 (IDHFDHLPDSILLLVFNKIGDVKALGRCCVVSRRFHSLVPQVDNVVVRV). The tract at residues 122 to 158 (TKRSSSSCGGSGSSSSSLSISGDDDGGEIEQGGVTHH) is disordered. Over residues 125 to 142 (SSSSCGGSGSSSSSLSIS) the composition is skewed to low complexity.

This is F-box protein At5g46170 from Arabidopsis thaliana (Mouse-ear cress).